The following is a 351-amino-acid chain: Sulfate/thiosulfate import ATP-binding protein CysA (351 aa).

The ABC transporter domain occupies 5–235 (IVVADATKRY…PANAFVMSFL (231 aa)). Position 37 to 44 (37 to 44 (GPSGSGKS)) interacts with ATP.

It belongs to the ABC transporter superfamily. Sulfate/tungstate importer (TC 3.A.1.6) family. The complex is composed of two ATP-binding proteins (CysA), two transmembrane proteins (CysT and CysW) and a solute-binding protein (CysP).

The protein resides in the cell membrane. The catalysed reaction is sulfate(out) + ATP + H2O = sulfate(in) + ADP + phosphate + H(+). It catalyses the reaction thiosulfate(out) + ATP + H2O = thiosulfate(in) + ADP + phosphate + H(+). Its function is as follows. Part of the ABC transporter complex CysAWTP involved in sulfate/thiosulfate import. Responsible for energy coupling to the transport system. The chain is Sulfate/thiosulfate import ATP-binding protein CysA from Mycobacterium bovis (strain ATCC BAA-935 / AF2122/97).